The chain runs to 338 residues: Glycerol-3-phosphate dehydrogenase [NAD(P)+] (338 aa).

Residues Ser-15, Tyr-16, His-36, and Lys-110 each contribute to the NADPH site. Positions 110, 139, and 141 each coordinate sn-glycerol 3-phosphate. Residue Ala-143 participates in NADPH binding. Residues Lys-195, Asp-248, Ser-258, Arg-259, and Asn-260 each coordinate sn-glycerol 3-phosphate. The Proton acceptor role is filled by Lys-195. An NADPH-binding site is contributed by Arg-259. The NADPH site is built by Val-283 and Glu-285.

It belongs to the NAD-dependent glycerol-3-phosphate dehydrogenase family.

It is found in the cytoplasm. The catalysed reaction is sn-glycerol 3-phosphate + NAD(+) = dihydroxyacetone phosphate + NADH + H(+). The enzyme catalyses sn-glycerol 3-phosphate + NADP(+) = dihydroxyacetone phosphate + NADPH + H(+). The protein operates within membrane lipid metabolism; glycerophospholipid metabolism. Functionally, catalyzes the reduction of the glycolytic intermediate dihydroxyacetone phosphate (DHAP) to sn-glycerol 3-phosphate (G3P), the key precursor for phospholipid synthesis. In Edwardsiella ictaluri (strain 93-146), this protein is Glycerol-3-phosphate dehydrogenase [NAD(P)+].